Reading from the N-terminus, the 562-residue chain is Putative transport protein Spro_1639 (562 aa).

Helical transmembrane passes span 8 to 28 (LLNG…LCLG), 37 to 57 (LGNS…HFAI), 66 to 86 (FMLF…SIFF), 94 to 114 (MLAL…GKLF), and 158 to 178 (HLSL…IFGA). 2 consecutive RCK C-terminal domains span residues 202–288 (LDTD…SFRN) and 290–373 (KEVF…KIGF). Transmembrane regions (helical) follow at residues 383–403 (LLAF…TIQF), 406–426 (FSFG…LGFL), 447–467 (FGLM…IGNS), 475–495 (MLIA…LFGA), and 541–561 (IANV…PGIL).

This sequence belongs to the AAE transporter (TC 2.A.81) family. YbjL subfamily.

Its subcellular location is the cell membrane. The chain is Putative transport protein Spro_1639 from Serratia proteamaculans (strain 568).